A 405-amino-acid polypeptide reads, in one-letter code: Serine-type anaerobic sulfatase-maturating enzyme (405 aa).

Positions 18–249 constitute a Radical SAM core domain; that stretch reads PRSPVPFHIL…QWRKRCDRGR (232 aa). [4Fe-4S] cluster contacts are provided by cysteine 35 and cysteine 39. Tyrosine 41 is an S-adenosyl-L-methionine binding site. Cysteine 42 contacts [4Fe-4S] cluster. Positions 84, 140, and 152 each coordinate S-adenosyl-L-methionine. The [4Fe-4S] cluster site is built by cysteine 270, cysteine 276, and cysteine 291. The active-site Proton acceptor is the aspartate 292. The [4Fe-4S] cluster site is built by cysteine 331, cysteine 334, cysteine 340, cysteine 344, and cysteine 357.

This sequence belongs to the radical SAM superfamily. Anaerobic sulfatase-maturating enzyme family. Monomer. Interacts with AtsA prior to its export to the periplasm. It depends on [4Fe-4S] cluster as a cofactor.

It localises to the cytoplasm. It carries out the reaction L-seryl-[sulfatase] + S-adenosyl-L-methionine = 3-oxo-L-alanyl-[sulfatase] + 5'-deoxyadenosine + L-methionine + H(+). Its pathway is protein modification; sulfatase oxidation. In terms of biological role, involved in 'Ser-type' sulfatase maturation under anaerobic conditions. Catalyzes the post-translational modification of serine ('Ser-72' in the arylsulfatase AtsA) into 3-oxoalanine (also known as C(alpha)-formylglycine (FGly)), by a free radical chemical mechanism initiated via the reductive cleavage of S-adenosyl-L-methionine (SAM). The sequence is that of Serine-type anaerobic sulfatase-maturating enzyme from Klebsiella aerogenes (Enterobacter aerogenes).